The sequence spans 481 residues: Trigger factor (481 aa).

Positions 174–261 (GDIAVVGFKG…LKDLKTRELP (88 aa)) constitute a PPIase FKBP-type domain. The tract at residues 430-481 (ENSTVTEKAPEAESDAAKASKPAAAKKDASKAKTAKTSKAKTAKAESESAES) is disordered. Over residues 437–447 (KAPEAESDAAK) the composition is skewed to basic and acidic residues. Residues 462 to 471 (KTAKTSKAKT) show a composition bias toward basic residues. The segment covering 472 to 481 (AKAESESAES) has biased composition (basic and acidic residues).

Belongs to the FKBP-type PPIase family. Tig subfamily.

The protein localises to the cytoplasm. It carries out the reaction [protein]-peptidylproline (omega=180) = [protein]-peptidylproline (omega=0). In terms of biological role, involved in protein export. Acts as a chaperone by maintaining the newly synthesized protein in an open conformation. Functions as a peptidyl-prolyl cis-trans isomerase. The sequence is that of Trigger factor from Synechococcus sp. (strain WH7803).